The sequence spans 312 residues: uncharacterized protein (312 aa).

Over 1–14 (MSIVETCISFVSTN) the chain is Extracellular. Residues 15-35 (PFYPFCTGLLLNCVVTPLYFW) form a helical membrane-spanning segment. Residues 36–41 (KTQNGR) lie on the Cytoplasmic side of the membrane. Residues 42-62 (IVVVSLLQFVVLYATAFISIG) form a helical membrane-spanning segment. At 63–179 (TDKSLYRNKW…LEYDQDTATE (117 aa)) the chain is on the extracellular side. Residues 70 to 173 (NKWVALPLSK…KGPLGELEYD (104 aa)) enclose the FAD-binding FR-type domain. Residues 180–200 (LGIIAGGSGITPVLQVLQEII) form a helical membrane-spanning segment. The Cytoplasmic segment spans residues 201–312 (PSPEDLTHIS…GNGTDKVFVF (112 aa)).

It belongs to the flavoprotein pyridine nucleotide cytochrome reductase family. FAD is required as a cofactor.

The protein resides in the membrane. This is an uncharacterized protein from Saccharomyces cerevisiae (strain ATCC 204508 / S288c) (Baker's yeast).